The primary structure comprises 310 residues: ADP-L-glycero-D-manno-heptose-6-epimerase (310 aa).

Residues 10–11 (FI), 31–32 (DN), K38, K53, 75–79 (EGACS), and N92 each bind NADP(+). Residue Y140 is the Proton acceptor of the active site. Residue K144 participates in NADP(+) binding. N169 contributes to the substrate binding site. NADP(+) is bound by residues V170 and K178. K178 functions as the Proton acceptor in the catalytic mechanism. Substrate is bound by residues S180, H187, 201-204 (FEGS), R209, and Y272.

This sequence belongs to the NAD(P)-dependent epimerase/dehydratase family. HldD subfamily. In terms of assembly, homopentamer. The cofactor is NADP(+).

It carries out the reaction ADP-D-glycero-beta-D-manno-heptose = ADP-L-glycero-beta-D-manno-heptose. It participates in nucleotide-sugar biosynthesis; ADP-L-glycero-beta-D-manno-heptose biosynthesis; ADP-L-glycero-beta-D-manno-heptose from D-glycero-beta-D-manno-heptose 7-phosphate: step 4/4. Its function is as follows. Catalyzes the interconversion between ADP-D-glycero-beta-D-manno-heptose and ADP-L-glycero-beta-D-manno-heptose via an epimerization at carbon 6 of the heptose. This Citrobacter koseri (strain ATCC BAA-895 / CDC 4225-83 / SGSC4696) protein is ADP-L-glycero-D-manno-heptose-6-epimerase.